Here is a 245-residue protein sequence, read N- to C-terminus: Geranylgeranylglyceryl phosphate synthase (245 aa).

Residues aspartate 24 and serine 54 each contribute to the Mg(2+) site. Sn-glycerol 1-phosphate is bound by residues 172 to 178 (YLEAGSG), 203 to 204 (GG), and 225 to 226 (GT).

This sequence belongs to the GGGP/HepGP synthase family. Group II subfamily. The cofactor is Mg(2+).

It is found in the cytoplasm. It carries out the reaction sn-glycerol 1-phosphate + (2E,6E,10E)-geranylgeranyl diphosphate = sn-3-O-(geranylgeranyl)glycerol 1-phosphate + diphosphate. It functions in the pathway membrane lipid metabolism; glycerophospholipid metabolism. Functionally, prenyltransferase that catalyzes the transfer of the geranylgeranyl moiety of geranylgeranyl diphosphate (GGPP) to the C3 hydroxyl of sn-glycerol-1-phosphate (G1P). This reaction is the first ether-bond-formation step in the biosynthesis of archaeal membrane lipids. In Staphylothermus marinus (strain ATCC 43588 / DSM 3639 / JCM 9404 / F1), this protein is Geranylgeranylglyceryl phosphate synthase.